A 476-amino-acid chain; its full sequence is ATP synthase subunit beta (476 aa).

ATP is bound at residue 161–168 (GGAGVGKT).

This sequence belongs to the ATPase alpha/beta chains family. In terms of assembly, F-type ATPases have 2 components, CF(1) - the catalytic core - and CF(0) - the membrane proton channel. CF(1) has five subunits: alpha(3), beta(3), gamma(1), delta(1), epsilon(1). CF(0) has three main subunits: a(1), b(2) and c(9-12). The alpha and beta chains form an alternating ring which encloses part of the gamma chain. CF(1) is attached to CF(0) by a central stalk formed by the gamma and epsilon chains, while a peripheral stalk is formed by the delta and b chains.

The protein localises to the cell membrane. It carries out the reaction ATP + H2O + 4 H(+)(in) = ADP + phosphate + 5 H(+)(out). Its function is as follows. Produces ATP from ADP in the presence of a proton gradient across the membrane. The catalytic sites are hosted primarily by the beta subunits. The sequence is that of ATP synthase subunit beta from Mycolicibacterium gilvum (strain PYR-GCK) (Mycobacterium gilvum (strain PYR-GCK)).